The following is a 141-amino-acid chain: Large ribosomal subunit protein uL16 (141 aa).

Residues 1 to 17 (MLQPKRTKYRKVQKGRM) show a composition bias toward basic residues. The segment at 1-29 (MLQPKRTKYRKVQKGRMKGNSQRGHELSN) is disordered.

The protein belongs to the universal ribosomal protein uL16 family. As to quaternary structure, part of the 50S ribosomal subunit.

Its function is as follows. Binds 23S rRNA and is also seen to make contacts with the A and possibly P site tRNAs. In Flavobacterium johnsoniae (strain ATCC 17061 / DSM 2064 / JCM 8514 / BCRC 14874 / CCUG 350202 / NBRC 14942 / NCIMB 11054 / UW101) (Cytophaga johnsonae), this protein is Large ribosomal subunit protein uL16.